Consider the following 334-residue polypeptide: MADERTGDSVKTRYDIALMNLNDIKIAVFRDSLSTYVEQKTGLTIQFNWPKSRCLVISTLCKIPFPTKSAAELQEMCSLLLCCPERLQLLGYVSVWGEETRDVCLTKTLVFAGEDEKFYGLDFVNETLYLLAETTERFAVLGLRRYDPVYREKDIRFLTKIDDVLQSLIDAQDNLWKFATIVYKNSGRHYIMKSCLENNDGVFVLFLTRKEDFPSRMEWNFFSDVYESMPYHGQVIGSIGKTLLYPKTMFVMMDLSGAIYGIDTIGTGIGSCVKIADDFESFLRQGIVRGYRRYKFFHRNISTVQEILPLCPHTSLGPTFSNNYNYDLSSEDDE.

Belongs to the herpesviridae US22 family. Post-translationally, isoform 1 is not glycosylated.

In terms of biological role, isoform 3 can transactivate the human immunodeficiency virus type 1 promoter. This Homo sapiens (Human) protein is Protein U17/U16 (U17/U16).